The primary structure comprises 64 residues: Alpha-conotoxin SI (64 aa).

A signal peptide spans Met-1–Ser-21. A propeptide spanning residues Phe-22–Glu-49 is cleaved from the precursor. The tract at residues Pro-23–Arg-47 is disordered. The segment covering Arg-26–Arg-47 has biased composition (basic and acidic residues). Disulfide bonds link Cys-51–Cys-56 and Cys-52–Cys-62. The residue at position 62 (Cys-62) is a Cysteine amide.

The protein belongs to the conotoxin A superfamily. Expressed by the venom duct.

The protein localises to the secreted. Its function is as follows. Alpha-conotoxins act on postsynaptic membranes, they bind to the nicotinic acetylcholine receptors (nAChR) and thus inhibit them. Is active on muscle nAChR (IC(50)=113 nM on adult subtype (alpha-1-beta-1-gamma-delta/CHRNA1-CHRNB1-CHRNG-CHRND) and IC(50)=142 nM on fetal subtype (alpha-1-beta-1-delta-epsilon/CHRNA1-CHRNB1-CHRND-CHRNE)). On mice muscle receptors, its higher affinity site is the alpha/delta nAChR subunit interface. On Torpedo receptors, it does not distinguish between alpha/delta and alpha/gamma acetylcholine-binding sites. In vivo, causes paralysis followed by death when injected into goldfish. In contrast, has no effect on mice, when similar doses are intraperitoneally or intracerebrally injected. This chain is Alpha-conotoxin SI, found in Conus striatus (Striated cone).